The primary structure comprises 216 residues: Probable phosphatase SPAC513.02 (216 aa).

His15 acts as the Tele-phosphohistidine intermediate in catalysis.

It belongs to the phosphoglycerate mutase family. BPG-dependent PGAM subfamily.

It localises to the cytoplasm. It is found in the nucleus. This Schizosaccharomyces pombe (strain 972 / ATCC 24843) (Fission yeast) protein is Probable phosphatase SPAC513.02.